The following is a 339-amino-acid chain: tRNA methyltransferase 10 homolog A (339 aa).

Disordered stretches follow at residues 1 to 90 and 282 to 339; these read MSSE…HDRK and DKAC…SLPH. Basic and acidic residues predominate over residues 14 to 35; the sequence is NVDKKQGINEDQEESQKPRLGE. A coiled-coil region spans residues 52–81; that stretch reads KQWEEQRELRKQKRKEKRKRKKLERQCQME. A compositionally biased stretch (basic residues) spans 61–74; it reads RKQKRKEKRKRKKL. Positions 89 to 279 constitute an SAM-dependent MTase TRM10-type domain; it reads RKRVRRDVVH…TILPQRKGAV (191 aa). Residues 300-309 show a composition bias toward acidic residues; it reads GGSDSDSSEE. Basic and acidic residues predominate over residues 310 to 330; the sequence is EYSRNELDSPHEEKQDKENHT. Ser-336 carries the post-translational modification Phosphoserine.

This sequence belongs to the class IV-like SAM-binding methyltransferase superfamily. TRM10 family. Interacts with tRNA. Expressed in embryonic and fetal brain. It is expressed throughout the dorsal telencephalon at 8 and 11 weeks of gestation, with highest expression in ventricular zone and marginal zone. Detected in cerebellar cortex and nuclei, but not in dorsal telencephalon, at later stages.

The protein localises to the nucleus. Its subcellular location is the nucleolus. It catalyses the reaction guanosine(9) in tRNA + S-adenosyl-L-methionine = N(1)-methylguanosine(9) in tRNA + S-adenosyl-L-homocysteine + H(+). Functionally, S-adenosyl-L-methionine-dependent guanine N(1)-methyltransferase that catalyzes the formation of N(1)-methylguanine at position 9 (m1G9) in tRNAs. Probably not able to catalyze formation of N(1)-methyladenine at position 9 (m1A9) in tRNAs. In Homo sapiens (Human), this protein is tRNA methyltransferase 10 homolog A (TRMT10A).